The following is a 273-amino-acid chain: Proteasome subunit beta type-10 (273 aa).

At Met-1 the chain carries N-acetylmethionine. The propeptide at 1–39 (MLKQAVEHRGGFSFENCQRNASLEHVLPGLRVPLARKTG) is removed in mature form. Residue Thr-40 is the Nucleophile of the active site. Ser-230 carries the post-translational modification Phosphoserine.

The protein belongs to the peptidase T1B family. In terms of assembly, the 26S proteasome consists of a 20S proteasome core and two 19S regulatory subunits. The 20S proteasome core is composed of 28 subunits that are arranged in four stacked rings, resulting in a barrel-shaped structure. The two end rings are each formed by seven alpha subunits, and the two central rings are each formed by seven beta subunits. The catalytic chamber with the active sites is on the inside of the barrel. Component of the immunoproteasome, where it displaces the equivalent housekeeping subunit PSMB7. Component of the spermatoproteasome, a form of the proteasome specifically found in testis. Autocleaved. The resulting N-terminal Thr residue of the mature subunit is responsible for the nucleophile proteolytic activity.

The protein localises to the cytoplasm. Its subcellular location is the nucleus. It catalyses the reaction Cleavage of peptide bonds with very broad specificity.. Its function is as follows. The proteasome is a multicatalytic proteinase complex which is characterized by its ability to cleave peptides with Arg, Phe, Tyr, Leu, and Glu adjacent to the leaving group at neutral or slightly basic pH. The proteasome has an ATP-dependent proteolytic activity. This subunit is involved in antigen processing to generate class I binding peptides. The polypeptide is Proteasome subunit beta type-10 (Psmb10) (Rattus norvegicus (Rat)).